Reading from the N-terminus, the 207-residue chain is Ribosomal RNA small subunit methyltransferase G (207 aa).

Residues Gly73, Leu78, 124–125 (VE), and Arg139 contribute to the S-adenosyl-L-methionine site.

The protein belongs to the methyltransferase superfamily. RNA methyltransferase RsmG family.

It is found in the cytoplasm. The catalysed reaction is guanosine(527) in 16S rRNA + S-adenosyl-L-methionine = N(7)-methylguanosine(527) in 16S rRNA + S-adenosyl-L-homocysteine. Functionally, specifically methylates the N7 position of guanine in position 527 of 16S rRNA. This Shigella flexneri protein is Ribosomal RNA small subunit methyltransferase G.